A 197-amino-acid chain; its full sequence is A-kinase anchor protein 14 (197 aa).

2 stretches are compositionally biased toward polar residues: residues 1 to 11 (MSETQNSTSQK) and 19 to 29 (AASQTMPNTQD). Residues 1 to 29 (MSETQNSTSQKAMDEDNKAASQTMPNTQD) form a disordered region. Positions 35–52 (ELTQVALALVEDVINYAV) are RII-binding.

As to quaternary structure, binds to type II regulatory subunits (RII). As to expression, present in cilia (at protein level). Expressed in tissues containing axoneme-based organelles (cilia and/or flagella): trachea and testis. Highly expressed in airway cilia.

It localises to the cytoplasm. Its function is as follows. Binds to type II regulatory subunits of protein kinase A and anchors/targets them. The polypeptide is A-kinase anchor protein 14 (AKAP14) (Homo sapiens (Human)).